Consider the following 292-residue polypeptide: UDP-3-O-acyl-N-acetylglucosamine deacetylase (292 aa).

Residues H76, H232, and D236 each coordinate Zn(2+). Residue H259 is the Proton donor of the active site.

This sequence belongs to the LpxC family. It depends on Zn(2+) as a cofactor.

The catalysed reaction is a UDP-3-O-[(3R)-3-hydroxyacyl]-N-acetyl-alpha-D-glucosamine + H2O = a UDP-3-O-[(3R)-3-hydroxyacyl]-alpha-D-glucosamine + acetate. It participates in glycolipid biosynthesis; lipid IV(A) biosynthesis; lipid IV(A) from (3R)-3-hydroxytetradecanoyl-[acyl-carrier-protein] and UDP-N-acetyl-alpha-D-glucosamine: step 2/6. Its function is as follows. Catalyzes the hydrolysis of UDP-3-O-myristoyl-N-acetylglucosamine to form UDP-3-O-myristoylglucosamine and acetate, the committed step in lipid A biosynthesis. The chain is UDP-3-O-acyl-N-acetylglucosamine deacetylase from Thermodesulfovibrio yellowstonii (strain ATCC 51303 / DSM 11347 / YP87).